Here is a 247-residue protein sequence, read N- to C-terminus: MKILLLLLTLSLASRTKAGEIIGGHEVKPHSRPYMALLSIKDQQPEAICGGFLIREDFVLTAAHCEGSIINVTLGAHNIKEQEKTQQVIPMVKCIPHPDYNPKTFSNDIMLLKLKSKAKRTRAVRPLNLPRRNVNVKPGDVCYVAGWGRMAPMGKYSNTLQEVELTVQKDRECESYFKNRYNKTNQICAGDPKTKRASFRGDSGGPLVCKKVAAGIVSYGYKDGSPPRAFTKVSSFLSWIKKTMKSS.

The signal sequence occupies residues 1 to 18; sequence MKILLLLLTLSLASRTKA. Residues 19 to 20 constitute a propeptide, activation peptide; the sequence is GE. The Peptidase S1 domain maps to 21-245; that stretch reads IIGGHEVKPH…FLSWIKKTMK (225 aa). Cys49 and Cys65 are oxidised to a cystine. His64 (charge relay system) is an active-site residue. Asn71 is a glycosylation site (N-linked (GlcNAc...) asparagine). The active-site Charge relay system is Asp108. 2 disulfides stabilise this stretch: Cys142-Cys209 and Cys173-Cys188. Asn182 carries N-linked (GlcNAc...) asparagine glycosylation. The Charge relay system role is filled by Ser203.

Belongs to the peptidase S1 family. Granzyme subfamily.

The protein localises to the secreted. It is found in the cytolytic granule. It catalyses the reaction Preferential cleavage: -Asp-|-Xaa- &gt;&gt; -Asn-|-Xaa- &gt; -Met-|-Xaa-, -Ser-|-Xaa-.. Inactivated by the serine protease inhibitor diisopropylfluorophosphate. In terms of biological role, abundant protease in the cytosolic granules of cytotoxic T-cells and NK-cells which activates caspase-independent pyroptosis when delivered into the target cell through the immunological synapse. It cleaves after Asp. Once delivered into the target cell, acts by catalyzing cleavage of gasdermin-E (GSDME), releasing the pore-forming moiety of GSDME, thereby triggering pyroptosis and target cell death. Seems to be linked to an activation cascade of caspases (aspartate-specific cysteine proteases) responsible for apoptosis execution. Cleaves caspase-3 and -9 (CASP3 and CASP9, respectively) to give rise to active enzymes mediating apoptosis. Cleaves and activates CASP7 in response to bacterial infection, promoting plasma membrane repair. The sequence is that of Granzyme B(G,H) (Gzmb) from Mus musculus (Mouse).